Consider the following 202-residue polypeptide: MLPPGTATLLTLLLAAGSLGQKPQRPRRPASPISTIQPKANFDAQQFAGTWLLVAVGSACRFLQEQGHRAEATTLHVAPQGTAMAVSTFRKLDGICWQVRQLYGDTGVLGRFLLQARDARGAVHVVVAETDYQSFAVLYLERAGQLSVKLYARSLPVSDSVLSGFEQRVQEAHLTEDQIFYFPKYGFCEAADQFHVLDEVRR.

The first 20 residues, methionine 1–glycine 20, serve as a signal peptide directing secretion. Pyrrolidone carboxylic acid is present on glutamine 21. A disulfide bridge links cysteine 96 with cysteine 188.

It belongs to the calycin superfamily. Lipocalin family. In terms of assembly, heterotrimer of 3 chains: alpha (C8A), beta (C8B) and gamma (C8G); the alpha and gamma chains are disulfide bonded. Component of the membrane attack complex (MAC), composed of complement C5b, C6, C7, C8A, C8B, C8G and multiple copies of the pore-forming subunit C9.

Its subcellular location is the secreted. The protein resides in the target cell membrane. Its activity is regulated as follows. Membrane attack complex (MAC) assembly is inhibited by CD59, thereby protecting self-cells from damage during complement activation. MAC assembly is also inhibited by clusterin (CLU) chaperones that inhibit polymerization of C9. Component of the membrane attack complex (MAC), a multiprotein complex activated by the complement cascade, which inserts into a target cell membrane and forms a pore, leading to target cell membrane rupture and cell lysis. The MAC is initiated by proteolytic cleavage of C5 into complement C5b in response to the classical, alternative, lectin and GZMK complement pathways. The complement pathways consist in a cascade of proteins that leads to phagocytosis and breakdown of pathogens and signaling that strengthens the adaptive immune system. C8G, together with C8A and C8B, inserts into the target membrane, but does not form pores by itself. During MAC assembly, associates with C5b, C6 and C7 to form the C5b8 intermediate complex that inserts into the target membrane and traverses the bilayer increasing membrane rigidity. This chain is Complement component C8 gamma chain, found in Homo sapiens (Human).